A 76-amino-acid polypeptide reads, in one-letter code: MKQIFNKLKWTGKKAYFWYVSRGGAGGEEVASTDDVVEVGSEGLVIRVGSQERYIPYHRIVEIRLESGEVLLNRRK.

This sequence belongs to the UPF0248 family.

This Pyrobaculum aerophilum (strain ATCC 51768 / DSM 7523 / JCM 9630 / CIP 104966 / NBRC 100827 / IM2) protein is UPF0248 protein PAE2518.